Consider the following 192-residue polypeptide: Ubiquitin-conjugating enzyme E2 27 (192 aa).

Residues 2 to 150 (IDFSRIQKEL…ARYWTETFAK (149 aa)) form the UBC core domain. Catalysis depends on Cys-88, which acts as the Glycyl thioester intermediate. A UBA domain is found at 153-192 (SLEEKVKRLVEMGFGDAQVRSAIESSGGDENLALEKLCSA).

Belongs to the ubiquitin-conjugating enzyme family. In terms of tissue distribution, expressed in seeds, pistils, siliques, hypocotyls and leaves.

The catalysed reaction is S-ubiquitinyl-[E1 ubiquitin-activating enzyme]-L-cysteine + [E2 ubiquitin-conjugating enzyme]-L-cysteine = [E1 ubiquitin-activating enzyme]-L-cysteine + S-ubiquitinyl-[E2 ubiquitin-conjugating enzyme]-L-cysteine.. It participates in protein modification; protein ubiquitination. Functionally, accepts the ubiquitin from the E1 complex and catalyzes its covalent attachment to other proteins. The chain is Ubiquitin-conjugating enzyme E2 27 (UBC27) from Arabidopsis thaliana (Mouse-ear cress).